Reading from the N-terminus, the 314-residue chain is tRNA dimethylallyltransferase (314 aa).

The segment at 1 to 24 (MAEEPQRSPAPTSPFAFTVPSNPL) is disordered. Residue 40–47 (GPTASGKS) participates in ATP binding. Residue 42–47 (TASGKS) coordinates substrate.

The protein belongs to the IPP transferase family. As to quaternary structure, monomer. It depends on Mg(2+) as a cofactor.

The enzyme catalyses adenosine(37) in tRNA + dimethylallyl diphosphate = N(6)-dimethylallyladenosine(37) in tRNA + diphosphate. Catalyzes the transfer of a dimethylallyl group onto the adenine at position 37 in tRNAs that read codons beginning with uridine, leading to the formation of N6-(dimethylallyl)adenosine (i(6)A). This Cereibacter sphaeroides (strain ATCC 17029 / ATH 2.4.9) (Rhodobacter sphaeroides) protein is tRNA dimethylallyltransferase.